Consider the following 241-residue polypeptide: Lipoprotein-releasing system ATP-binding protein LolD 2 (241 aa).

The region spanning 6–241 is the ABC transporter domain; sequence LDAQQLSKSY…YKSYEKSTAV (236 aa). 43–50 is an ATP binding site; that stretch reads GASGSGKT.

The protein belongs to the ABC transporter superfamily. Lipoprotein translocase (TC 3.A.1.125) family. As to quaternary structure, the complex is composed of two ATP-binding proteins (LolD) and two transmembrane proteins (LolC and LolE).

Its subcellular location is the cell inner membrane. In terms of biological role, part of the ABC transporter complex LolCDE involved in the translocation of mature outer membrane-directed lipoproteins, from the inner membrane to the periplasmic chaperone, LolA. Responsible for the formation of the LolA-lipoprotein complex in an ATP-dependent manner. In Chlorobium chlorochromatii (strain CaD3), this protein is Lipoprotein-releasing system ATP-binding protein LolD 2.